The primary structure comprises 173 residues: Protein-export protein SecB 1 (173 aa).

It belongs to the SecB family. As to quaternary structure, homotetramer, a dimer of dimers. One homotetramer interacts with 1 SecA dimer.

Its subcellular location is the cytoplasm. One of the proteins required for the normal export of preproteins out of the cell cytoplasm. It is a molecular chaperone that binds to a subset of precursor proteins, maintaining them in a translocation-competent state. It also specifically binds to its receptor SecA. In Gluconobacter oxydans (strain 621H) (Gluconobacter suboxydans), this protein is Protein-export protein SecB 1.